Consider the following 389-residue polypeptide: Pyruvylated Gal-beta-1,3-epitope synthesis protein 2 (389 aa).

At 1–16 (MTKLWVNFFSQKLLRL) the chain is on the cytoplasmic side. Residues 17 to 37 (LIPSIIVVFAFAALFAIYSPI) form a helical membrane-spanning segment. At 38-389 (QLGGINFYKR…WSNSFDLITA (352 aa)) the chain is on the lumenal side.

It localises to the endoplasmic reticulum membrane. It is found in the golgi apparatus membrane. In terms of biological role, involved in cell wall biogenesis. Has a role in the addition of Gal-beta1,3 moeities to galactomannans and their subsequent pyruvylation. Has a role in meiosis. The sequence is that of Pyruvylated Gal-beta-1,3-epitope synthesis protein 2 (pvg2) from Schizosaccharomyces pombe (strain 972 / ATCC 24843) (Fission yeast).